Consider the following 863-residue polypeptide: Chromatin assembly factor 1 subunit A (863 aa).

Disordered regions lie at residues Met1 to Asp353, Leu423 to Ser466, Asp513 to Met579, and Val749 to Ala863. Residues Leu42–Arg54 show a composition bias toward basic and acidic residues. The residue at position 111 (Thr111) is a Phosphothreonine. The residue at position 118 (Ser118) is a Phosphoserine. Low complexity predominate over residues Ser144–Leu154. Acidic residues-rich tracts occupy residues Thr155–Asp168 and Gln177–Gln196. The segment covering Glu205–Ser237 has biased composition (low complexity). 2 stretches are compositionally biased toward basic and acidic residues: residues Gln254–Asp353 and Gln457–Ser466. Acidic residues-rich tracts occupy residues Asp513–Gly524 and Gly532–Gly547. The span at Asp569–Met579 shows a compositional bias: basic and acidic residues. Low complexity predominate over residues Asn760 to Ser771. Over residues Asp806–Cys815 the composition is skewed to acidic residues. Residues Gln821–Gln835 are compositionally biased toward polar residues. The segment covering Thr850–Ala863 has biased composition (low complexity).

Belongs to the CHAF1A family.

It is found in the nucleus. Acts as a component of the histone chaperone complex chromatin assembly factor 1 (CAF-1), which assembles histone octamers onto DNA during replication and repair. CAF-1 performs the first step of the nucleosome assembly process, bringing newly synthesized histones H3 and H4 to replicating DNA; histones H2A/H2B can bind to this chromatin precursor subsequent to DNA replication to complete the histone octamer. This chain is Chromatin assembly factor 1 subunit A (chaf1a), found in Danio rerio (Zebrafish).